A 391-amino-acid chain; its full sequence is MFGTALSSSATKVLLLGSGELGKEVAIECQRLGFEVIAVDRYLNAPAMQVAHRSYAIDMLDANALEEVINKEQPDFVVPEIEAIATDKLVELEKQGLNVVPTANATKLTMNREGIRRLAAEELQLPTSPYRFVDSYEELVEAVKFVGMPCVIKPVMSSSGKGQSVIKTEADIRTSWDYAQDGGRSGAGRVIVEGFVDFDYEISLLTVRAVDGVHFCAPIGHRQEDGDYRESWQPQVMTEAALKQAQNAAEKVVNALGGYGLFGVELFIKGDNIYFNEVSPRPHDTGLVTLISQEMSEFALHVRAFTGMPINQVTQYGPSASSVILGQGTSTNIRFDGLTEALSQPQTQIKLFGKPEIDGRRRLGVAITRRDNLETAIEDAVTASNKVQVIY.

N(1)-(5-phospho-beta-D-ribosyl)glycinamide contacts are provided by residues 20–21 (EL) and Glu80. Residues Arg112, Lys153, 158-163 (SSGKGQ), 193-196 (EGFV), and Glu201 each bind ATP. Residues 117 to 306 (RLAAEELQLP…EFALHVRAFT (190 aa)) enclose the ATP-grasp domain. Residues Glu265 and Glu277 each coordinate Mg(2+). N(1)-(5-phospho-beta-D-ribosyl)glycinamide is bound by residues Asp284, Lys354, and 361 to 362 (RR).

Belongs to the PurK/PurT family. Homodimer.

The enzyme catalyses N(1)-(5-phospho-beta-D-ribosyl)glycinamide + formate + ATP = N(2)-formyl-N(1)-(5-phospho-beta-D-ribosyl)glycinamide + ADP + phosphate + H(+). It participates in purine metabolism; IMP biosynthesis via de novo pathway; N(2)-formyl-N(1)-(5-phospho-D-ribosyl)glycinamide from N(1)-(5-phospho-D-ribosyl)glycinamide (formate route): step 1/1. Functionally, involved in the de novo purine biosynthesis. Catalyzes the transfer of formate to 5-phospho-ribosyl-glycinamide (GAR), producing 5-phospho-ribosyl-N-formylglycinamide (FGAR). Formate is provided by PurU via hydrolysis of 10-formyl-tetrahydrofolate. This is Formate-dependent phosphoribosylglycinamide formyltransferase from Aliivibrio fischeri (strain ATCC 700601 / ES114) (Vibrio fischeri).